The following is a 542-amino-acid chain: CTP synthase (542 aa).

The amidoligase domain stretch occupies residues 1–265 (MTRYIFVTGG…DDFVVERFGL (265 aa)). Residue Ser-13 participates in CTP binding. A UTP-binding site is contributed by Ser-13. ATP-binding positions include 14 to 19 (SLGKGI) and Asp-71. Mg(2+) contacts are provided by Asp-71 and Glu-139. CTP is bound by residues 146-148 (DIE), 186-191 (KTKPTQ), and Lys-222. Residues 186–191 (KTKPTQ) and Lys-222 contribute to the UTP site. Residues 290–541 (TIAMVGKYME…VKAALAQKNK (252 aa)) enclose the Glutamine amidotransferase type-1 domain. Residue Gly-351 participates in L-glutamine binding. Cys-378 functions as the Nucleophile; for glutamine hydrolysis in the catalytic mechanism. Residues 379-382 (LGMQ), Glu-402, and Arg-469 each bind L-glutamine. Catalysis depends on residues His-514 and Glu-516.

It belongs to the CTP synthase family. Homotetramer.

The catalysed reaction is UTP + L-glutamine + ATP + H2O = CTP + L-glutamate + ADP + phosphate + 2 H(+). The enzyme catalyses L-glutamine + H2O = L-glutamate + NH4(+). It carries out the reaction UTP + NH4(+) + ATP = CTP + ADP + phosphate + 2 H(+). The protein operates within pyrimidine metabolism; CTP biosynthesis via de novo pathway; CTP from UDP: step 2/2. With respect to regulation, allosterically activated by GTP, when glutamine is the substrate; GTP has no effect on the reaction when ammonia is the substrate. The allosteric effector GTP functions by stabilizing the protein conformation that binds the tetrahedral intermediate(s) formed during glutamine hydrolysis. Inhibited by the product CTP, via allosteric rather than competitive inhibition. In terms of biological role, catalyzes the ATP-dependent amination of UTP to CTP with either L-glutamine or ammonia as the source of nitrogen. Regulates intracellular CTP levels through interactions with the four ribonucleotide triphosphates. This is CTP synthase from Pseudomonas entomophila (strain L48).